The chain runs to 243 residues: Transmembrane protein 174 (243 aa).

2 consecutive transmembrane segments (helical) span residues 40-60 (LLFS…MGWI) and 73-93 (LLGP…VCKF).

As to quaternary structure, interacts with SLC34A1; regulates SLC34A1 internalization by PTH and FGF23.

It localises to the endoplasmic reticulum membrane. It is found in the apical cell membrane. In terms of biological role, regulator of plasma phosphate homeostasis. Decreases serum inorganic phosphate (Pi) uptake by regulating the sodium-phosphate cotransporter SLC34A1 trafficking by PTH and FGF23 in the kidney. This chain is Transmembrane protein 174 (TMEM174), found in Pongo abelii (Sumatran orangutan).